We begin with the raw amino-acid sequence, 598 residues long: Pentatricopeptide repeat-containing protein At5g14820, mitochondrial (598 aa).

A mitochondrion-targeting transit peptide spans Met1–Val98. PPR repeat units follow at residues Asp193 to Thr227, Glu229 to Ile261, Gly262 to Arg292, Asn296 to Pro330, Asp331 to Pro365, Asn366 to Pro400, Asp401 to Pro435, Asp436 to Pro470, Ser471 to Pro505, and Asp506 to Thr540.

The protein belongs to the PPR family. P subfamily.

It localises to the mitochondrion. The chain is Pentatricopeptide repeat-containing protein At5g14820, mitochondrial from Arabidopsis thaliana (Mouse-ear cress).